A 363-amino-acid polypeptide reads, in one-letter code: Mitochondrial phosphate carrier protein 2, mitochondrial (363 aa).

The chain crosses the membrane as a helical span at residues 65-85; it reads AYFAACTVAGMLSCGITHTAI. Solcar repeat units follow at residues 65-149, 162-246, and 263-342; these read AYFA…AKKY, YKTL…TVEL, and VQLG…VKVL. Over 86–123 the chain is Mitochondrial matrix; the sequence is TPLDVIKCNMQIDPLKYKNITSAFKTTIKEQGLKGFTR. A helical transmembrane segment spans residues 124–143; sequence GWSPTLLGYSAQGAFKYGLY. Over 144–164 the chain is Mitochondrial intermembrane; that stretch reads EYAKKYYSDIVGPEYAAKYKT. The chain crosses the membrane as a helical span at residues 165–185; the sequence is LIYLAGSASAEIVADVALCPM. The Mitochondrial matrix portion of the chain corresponds to 186 to 220; that stretch reads EAVKVRVQTQPGFARGLSDGLPKIIKSEGFRGLHK. The chain crosses the membrane as a helical span at residues 221–240; sequence GLVPLWGRQIPYTMMKFATF. Residues 241-261 are Mitochondrial intermembrane-facing; it reads ENTVELIYKKVMPTPKEECSK. A helical transmembrane segment spans residues 262 to 282; that stretch reads PVQLGVSFAGGYIAGIFCAII. The Mitochondrial matrix segment spans residues 283–321; it reads SHPADNLVSFLNNSKGATVADAVKRLGLWGMLTRGLPLR. The chain crosses the membrane as a helical span at residues 322 to 342; that stretch reads IFMIGTLTGAQWVIYDAVKVL. At 343-363 the chain is on the mitochondrial intermembrane side; that stretch reads AGLPTTGGASPATALAPSVSA.

The protein belongs to the mitochondrial carrier (TC 2.A.29) family. Expressed in leaves. Strong expression in senescent leaves.

Its subcellular location is the mitochondrion inner membrane. In terms of biological role, transport of phosphate groups from the cytosol to the mitochondrial matrix. Mediates salt stress tolerance through an ATP-dependent pathway and via modulation of the gibberellin metabolism. This Arabidopsis thaliana (Mouse-ear cress) protein is Mitochondrial phosphate carrier protein 2, mitochondrial (MPT2).